A 416-amino-acid chain; its full sequence is Serine hydroxymethyltransferase (416 aa).

(6S)-5,6,7,8-tetrahydrofolate-binding positions include leucine 121 and 125–127 (GHL). At lysine 229 the chain carries N6-(pyridoxal phosphate)lysine.

The protein belongs to the SHMT family. In terms of assembly, homodimer. Pyridoxal 5'-phosphate serves as cofactor.

It is found in the cytoplasm. It catalyses the reaction (6R)-5,10-methylene-5,6,7,8-tetrahydrofolate + glycine + H2O = (6S)-5,6,7,8-tetrahydrofolate + L-serine. It functions in the pathway one-carbon metabolism; tetrahydrofolate interconversion. The protein operates within amino-acid biosynthesis; glycine biosynthesis; glycine from L-serine: step 1/1. Catalyzes the reversible interconversion of serine and glycine with tetrahydrofolate (THF) serving as the one-carbon carrier. This reaction serves as the major source of one-carbon groups required for the biosynthesis of purines, thymidylate, methionine, and other important biomolecules. Also exhibits THF-independent aldolase activity toward beta-hydroxyamino acids, producing glycine and aldehydes, via a retro-aldol mechanism. In Neisseria gonorrhoeae (strain ATCC 700825 / FA 1090), this protein is Serine hydroxymethyltransferase.